The following is a 312-amino-acid chain: Zinc finger CCCH domain-containing protein 25 (312 aa).

Residues 36–114 (AYVFVGGIPY…RIVRVDHVSK (79 aa)) enclose the RRM domain. Residues 130–157 (REARGVCYAFQKGECNRGASCRYSHDEQ) form a C3H1-type zinc finger. Residues 153 to 312 (SHDEQRNANT…DSERYRKSRR (160 aa)) are disordered. Composition is skewed to basic and acidic residues over residues 166–184 (SKEE…EPPM), 197–210 (RFPD…KSTG), and 219–312 (EAYK…KSRR).

The polypeptide is Zinc finger CCCH domain-containing protein 25 (Oryza sativa subsp. japonica (Rice)).